The following is a 70-amino-acid chain: DNA gyrase inhibitor YacG (70 aa).

Zn(2+) contacts are provided by cysteine 7, cysteine 10, cysteine 26, and cysteine 30.

This sequence belongs to the DNA gyrase inhibitor YacG family. As to quaternary structure, interacts with GyrB. Requires Zn(2+) as cofactor.

Its function is as follows. Inhibits all the catalytic activities of DNA gyrase by preventing its interaction with DNA. Acts by binding directly to the C-terminal domain of GyrB, which probably disrupts DNA binding by the gyrase. The chain is DNA gyrase inhibitor YacG from Shewanella woodyi (strain ATCC 51908 / MS32).